A 182-amino-acid chain; its full sequence is NAD(P)H-quinone oxidoreductase subunit I, chloroplastic (182 aa).

4Fe-4S ferredoxin-type domains lie at 52 to 81 (GRIH…VDWE) and 92 to 121 (KSYS…MTEE). Cys61, Cys64, Cys67, Cys71, Cys101, Cys104, Cys107, and Cys111 together coordinate [4Fe-4S] cluster.

It belongs to the complex I 23 kDa subunit family. NDH is composed of at least 16 different subunits, 5 of which are encoded in the nucleus. It depends on [4Fe-4S] cluster as a cofactor.

It localises to the plastid. The protein resides in the chloroplast thylakoid membrane. It catalyses the reaction a plastoquinone + NADH + (n+1) H(+)(in) = a plastoquinol + NAD(+) + n H(+)(out). It carries out the reaction a plastoquinone + NADPH + (n+1) H(+)(in) = a plastoquinol + NADP(+) + n H(+)(out). In terms of biological role, NDH shuttles electrons from NAD(P)H:plastoquinone, via FMN and iron-sulfur (Fe-S) centers, to quinones in the photosynthetic chain and possibly in a chloroplast respiratory chain. The immediate electron acceptor for the enzyme in this species is believed to be plastoquinone. Couples the redox reaction to proton translocation, and thus conserves the redox energy in a proton gradient. The sequence is that of NAD(P)H-quinone oxidoreductase subunit I, chloroplastic from Chaetosphaeridium globosum (Charophycean green alga).